The following is a 587-amino-acid chain: Aspartate--tRNA ligase (587 aa).

Glutamate 174 lines the L-aspartate pocket. The aspartate stretch occupies residues 198–201 (QITK). Residue arginine 220 coordinates L-aspartate. ATP contacts are provided by residues 220–222 (RDE) and glutamine 229. An L-aspartate-binding site is contributed by histidine 443. Glutamate 477 is a binding site for ATP. Arginine 484 provides a ligand contact to L-aspartate. 529 to 532 (GLDR) lines the ATP pocket.

Belongs to the class-II aminoacyl-tRNA synthetase family. Type 1 subfamily. Homodimer.

Its subcellular location is the cytoplasm. The catalysed reaction is tRNA(Asp) + L-aspartate + ATP = L-aspartyl-tRNA(Asp) + AMP + diphosphate. In terms of biological role, catalyzes the attachment of L-aspartate to tRNA(Asp) in a two-step reaction: L-aspartate is first activated by ATP to form Asp-AMP and then transferred to the acceptor end of tRNA(Asp). This Streptococcus pneumoniae serotype 4 (strain ATCC BAA-334 / TIGR4) protein is Aspartate--tRNA ligase.